A 282-amino-acid polypeptide reads, in one-letter code: Pantothenate synthetase (282 aa).

30–37 (MGYLHEGH) contributes to the ATP binding site. His-37 acts as the Proton donor in catalysis. Gln-61 is a (R)-pantoate binding site. Residue Gln-61 coordinates beta-alanine. 147 to 150 (GQKD) is an ATP binding site. A (R)-pantoate-binding site is contributed by Gln-153. Residues Val-176 and 184 to 187 (MSSR) each bind ATP.

It belongs to the pantothenate synthetase family. Homodimer.

Its subcellular location is the cytoplasm. The catalysed reaction is (R)-pantoate + beta-alanine + ATP = (R)-pantothenate + AMP + diphosphate + H(+). It functions in the pathway cofactor biosynthesis; (R)-pantothenate biosynthesis; (R)-pantothenate from (R)-pantoate and beta-alanine: step 1/1. Its function is as follows. Catalyzes the condensation of pantoate with beta-alanine in an ATP-dependent reaction via a pantoyl-adenylate intermediate. The protein is Pantothenate synthetase of Pelotomaculum thermopropionicum (strain DSM 13744 / JCM 10971 / SI).